Here is a 454-residue protein sequence, read N- to C-terminus: Flavonoid 3-O-glucosyltransferase (454 aa).

Thr25 is a UDP binding site. His26 acts as the Proton acceptor in catalysis. Arg89 serves as a coordination point for myricetin. Asp124 functions as the Charge relay in the catalytic mechanism. His155, Glu192, and Phe202 together coordinate myricetin. Ser282, Ser308, Trp334, and Ala335 together coordinate UDP. UDP-alpha-D-glucose is bound by residues Ala335, Gln337, His352, Trp355, Asn356, Ser357, and Glu360. Position 352 (His352) interacts with UDP. UDP is bound by residues Asn356, Ser357, and Glu360. Position 375 (Gly375) interacts with myricetin. UDP-alpha-D-glucose-binding residues include Asp376 and Gln377.

It belongs to the UDP-glycosyltransferase family. Highly expressed in flower buds, flowers and pods. Lower expression in leaves, petioles and stems.

It participates in secondary metabolite biosynthesis; flavonoid biosynthesis. Functionally, catalyzes the glycosylation of flavonoids at the 3-O-position. Glycosylates the 7-O-position if the 3-O-position is not available. Also able to perform 3-O-glycosylation of anthocyanidins. The sequence is that of Flavonoid 3-O-glucosyltransferase (UGT78G1) from Medicago truncatula (Barrel medic).